A 288-amino-acid chain; its full sequence is Pantothenate synthetase (288 aa).

ATP is bound at residue Met-30–His-37. His-37 serves as the catalytic Proton donor. Residue Gln-61 participates in (R)-pantoate binding. Position 61 (Gln-61) interacts with beta-alanine. Residue Gly-148–Asp-151 participates in ATP binding. Gln-154 provides a ligand contact to (R)-pantoate. ATP contacts are provided by residues Val-177 and Leu-185–Arg-188.

Belongs to the pantothenate synthetase family. Homodimer.

It localises to the cytoplasm. The enzyme catalyses (R)-pantoate + beta-alanine + ATP = (R)-pantothenate + AMP + diphosphate + H(+). Its pathway is cofactor biosynthesis; (R)-pantothenate biosynthesis; (R)-pantothenate from (R)-pantoate and beta-alanine: step 1/1. Functionally, catalyzes the condensation of pantoate with beta-alanine in an ATP-dependent reaction via a pantoyl-adenylate intermediate. The protein is Pantothenate synthetase of Psychrobacter arcticus (strain DSM 17307 / VKM B-2377 / 273-4).